We begin with the raw amino-acid sequence, 125 residues long: Small ribosomal subunit protein eS8 (125 aa).

Residues 1–36 form a disordered region; the sequence is MKDQGRSTRKRTGGRLHDVSKKKRHQLGREPAETTV. A compositionally biased stretch (basic residues) spans 7–26; it reads STRKRTGGRLHDVSKKKRHQ. Over residues 27–36 the composition is skewed to basic and acidic residues; sequence LGREPAETTV.

The protein belongs to the eukaryotic ribosomal protein eS8 family. As to quaternary structure, part of the 30S ribosomal subunit.

The sequence is that of Small ribosomal subunit protein eS8 from Haloquadratum walsbyi (strain DSM 16790 / HBSQ001).